We begin with the raw amino-acid sequence, 328 residues long: Solute-binding protein Bamb_6123 (328 aa).

The signal sequence occupies residues 1–26 (MTHRFPRSRTALAVALMAGFAMSAQA). 6 residues coordinate beta-D-galacturonate: H35, E73, R89, R149, N209, and E236. Positions 35, 73, 89, 149, 209, and 236 each coordinate beta-D-glucuronate.

It belongs to the bacterial solute-binding protein 7 family. In terms of assembly, the complex is comprised of an extracytoplasmic solute-binding protein and a heteromeric permease formed by two transmembrane proteins.

The protein localises to the periplasm. In terms of biological role, solute-binding protein that binds D-galacturonate and D-glucuronate (in vitro). Probably part of a tripartite ATP-independent periplasmic (TRAP) transport system that mediates solute transport into the cytoplasm. In Burkholderia ambifaria (strain ATCC BAA-244 / DSM 16087 / CCUG 44356 / LMG 19182 / AMMD) (Burkholderia cepacia (strain AMMD)), this protein is Solute-binding protein Bamb_6123.